The following is a 448-amino-acid chain: Glutamyl-tRNA reductase (448 aa).

Substrate contacts are provided by residues 49–52 (TCNR), Ser-109, 114–116 (ETQ), and Gln-120. Residue Cys-50 is the Nucleophile of the active site. Residue 189–194 (GAGEMS) coordinates NADP(+).

It belongs to the glutamyl-tRNA reductase family. As to quaternary structure, homodimer.

The catalysed reaction is (S)-4-amino-5-oxopentanoate + tRNA(Glu) + NADP(+) = L-glutamyl-tRNA(Glu) + NADPH + H(+). It participates in porphyrin-containing compound metabolism; protoporphyrin-IX biosynthesis; 5-aminolevulinate from L-glutamyl-tRNA(Glu): step 1/2. Its function is as follows. Catalyzes the NADPH-dependent reduction of glutamyl-tRNA(Glu) to glutamate 1-semialdehyde (GSA). This Staphylococcus aureus (strain NCTC 8325 / PS 47) protein is Glutamyl-tRNA reductase.